A 284-amino-acid polypeptide reads, in one-letter code: Diaminopimelate epimerase (284 aa).

Substrate-binding residues include Asn20, Gln53, and Asn73. Cys82 (proton donor) is an active-site residue. Substrate-binding positions include 83–84 (GN), Asn167, Asn200, and 218–219 (ER). The active-site Proton acceptor is the Cys227. 228–229 (GS) contributes to the substrate binding site.

This sequence belongs to the diaminopimelate epimerase family. In terms of assembly, homodimer.

The protein localises to the cytoplasm. The catalysed reaction is (2S,6S)-2,6-diaminopimelate = meso-2,6-diaminopimelate. It participates in amino-acid biosynthesis; L-lysine biosynthesis via DAP pathway; DL-2,6-diaminopimelate from LL-2,6-diaminopimelate: step 1/1. Its function is as follows. Catalyzes the stereoinversion of LL-2,6-diaminopimelate (L,L-DAP) to meso-diaminopimelate (meso-DAP), a precursor of L-lysine and an essential component of the bacterial peptidoglycan. In Xanthomonas oryzae pv. oryzae (strain MAFF 311018), this protein is Diaminopimelate epimerase.